A 177-amino-acid chain; its full sequence is Bifunctional protein PyrR (177 aa).

Substrate contacts are provided by residues 42–43 (SR), 104–112 (DDVLYTGRT), and arginine 137. Residues 100–112 (VVIVDDVLYTGRT) carry the PRPP-binding motif.

It belongs to the purine/pyrimidine phosphoribosyltransferase family. PyrR subfamily.

The enzyme catalyses UMP + diphosphate = 5-phospho-alpha-D-ribose 1-diphosphate + uracil. Regulates the transcription of the pyrimidine nucleotide (pyr) operon in response to exogenous pyrimidines. In terms of biological role, also displays a weak uracil phosphoribosyltransferase activity which is not physiologically significant. This Fusobacterium nucleatum subsp. nucleatum (strain ATCC 25586 / DSM 15643 / BCRC 10681 / CIP 101130 / JCM 8532 / KCTC 2640 / LMG 13131 / VPI 4355) protein is Bifunctional protein PyrR.